Reading from the N-terminus, the 1110-residue chain is ATP-dependent DNA helicase MPH1 (1110 aa).

A compositionally biased stretch (polar residues) spans 24-34 (LNEVSDSQTGR). Disordered regions lie at residues 24–165 (LNEV…TNGK), 178–212 (FEEEQSARGDAEMLDDSIEEPGDTQVHATPGPVTN), and 236–305 (TETA…PTHH). 2 stretches are compositionally biased toward basic and acidic residues: residues 42-57 (NSHEINTDSTGRREIE) and 178-188 (FEEEQSARGDA). Residues 189 to 199 (EMLDDSIEEPG) show a composition bias toward acidic residues. Polar residues-rich tracts occupy residues 246-273 (ISSQPRPSQNTTRRPTASQSTSFRQTTL) and 287-300 (QPATQTWPSSSRNE). One can recognise a Helicase ATP-binding domain in the interval 331-499 (IAHRALFHNL…EVIDGLSISR (169 aa)). 344–351 (LPTGLGKT) contributes to the ATP binding site. A DEAH box motif is present at residues 447–450 (DEAH). Residues 675 to 846 (ILNHFLDAGG…RFTFHTDKSS (172 aa)) enclose the Helicase C-terminal domain. 3 disordered regions span residues 867–937 (ENSQ…PDLG), 1013–1055 (VGDP…RCGT), and 1069–1110 (NLAW…DVFE). The span at 879–890 (RSRAPKRPPKKF) shows a compositional bias: basic residues. Basic and acidic residues-rich tracts occupy residues 891–900 (HMPDGVEKGF), 1041–1055 (QSREQPPRVEKRCGT), and 1077–1093 (EAPRPESDGTDNRDQKP).

This sequence belongs to the DEAD box helicase family. DEAH subfamily. FANCM sub-subfamily. In terms of assembly, interacts with the MHF histone-fold complex to form the FANCM-MHF complex.

It is found in the nucleus. The enzyme catalyses ATP + H2O = ADP + phosphate + H(+). Functionally, ATP-dependent DNA helicase involved in DNA damage repair by homologous recombination and in genome maintenance. Capable of unwinding D-loops. Plays a role in limiting crossover recombinants during mitotic DNA double-strand break (DSB) repair. Component of a FANCM-MHF complex which promotes gene conversion at blocked replication forks, probably by reversal of the stalled fork. The protein is ATP-dependent DNA helicase MPH1 of Coccidioides immitis (strain RS) (Valley fever fungus).